Consider the following 30-residue polypeptide: Cycloviolacin-O24 (30 aa).

The cyclopeptide (Gly-Asn) cross-link spans 1–30; it reads GLPTCGETCFGGTCNTPGCTCDPWPVCTHN. Intrachain disulfides connect C5/C19, C9/C21, and C14/C27.

This is a cyclic peptide. As to expression, expressed in leaves but not in petals, petioles, roots and runners (at protein level).

Its function is as follows. Probably participates in a plant defense mechanism. Has hemolytic activity. This is Cycloviolacin-O24 from Viola odorata (Sweet violet).